Here is an 83-residue protein sequence, read N- to C-terminus: Bowman-Birk type proteinase inhibitor (83 aa).

7 disulfide bridges follow: Cys-18–Cys-72, Cys-19–Cys-34, Cys-22–Cys-68, Cys-24–Cys-32, Cys-42–Cys-49, Cys-46–Cys-61, and Cys-51–Cys-59.

The protein belongs to the Bowman-Birk serine protease inhibitor family.

The chain is Bowman-Birk type proteinase inhibitor from Phaseolus lunatus (Lima bean).